Consider the following 1127-residue polypeptide: MPKFPQFRLILVLFYLISMIQWSVITFSLGFFLNVCIFAYFVFFKSLPDLPKPQPRFVDIVPESSNTVDVDKELKSVEGLIQDGNAQIGKELESIVNLIIKDFVQPWFTKIDKNSDAEFLKVIKWRLLQTLLVVKDKLMKNDSASLIVLKLLPIFNKHFSTFCDAREAVLSDLTLERHKSANIDLQIAVEFNKNYKIHKSLSLKPNALQKEIEKSIRKTVIGLLPHLFDNDELDSLLVFTLMTEVLTTCIISPLIFKFTDPDSWNLRIVSLSQNYFEEKHKVHKIRRMLSKELQDHRKVMNDVANKDVGEPSSEKLELNAEYTGKQFEHYLNQLDSLLDLSDIKYVAYSLALKIYQLKENEHLTKENLKYKKRLLLSLNLIESKLSFPGSEIDTASKKLAREANYPDLNMDNGIVLKEMASFLTSITLKDIVDDSEFLPFFESFLGSVPETQGSTFLEYSQTIESFKNPLEDATSEDIISGYSGISTMQLQEISSKFFHNNNLQNMKLLDEGLVKNIILFRNSFQINNDEDTFILARKSVLLLQTEAIKYLDDRFLPLFKKTPSFLKMLSTSHIISTDIYAHFLSRIGGVNNPEQNKIIKDNVKTDFMNPVRIFANPGITDALDNIVNGSGSKPHKSRISSNPRYSQLFGSENDNIFKDKLFDDENDNTSEISVVEDQLDHPRNMEKVSVSSGNSGLNPSQFYGSNNFRDNIASLTISIDQIEKELELLRHLILKADLTNNQMQLKILKKSQRTLLKELEMKELLKQQYMVQENGNSLFRKTKIYIRSYFSENSSNGLKEITYYIINIHHFNNGQVSSWDMARRYNEFFELNTYLKKNFRDLMRQLQDLFPSKVKMSLKYHVTKTLLYEERKQKLEKYLRELLSISEICEDNIFRRFLTDPTPFKLNKEYMHDDILEEPLHEPIGSSNSTSNSSSVVDLQSSEDGGELNFYEDERHFFTDSGYPFYSQNKSFVKQICDLFISLFALNKANAGWLRGRAIITVLQQLLGSTIEKYIKVSIQKLRSEDQVFEAIVTFKNMLWGDNGLFERKRNETAEATRSEGERLRTEQLALTSLQRLFADTCGRVVGLRDSHEAAGRVHAMLQNPYLNASLLLEALDAILLDIICND.

Positions 85 to 273 (NAQIGKELES…WNLRIVSLSQ (189 aa)) constitute a PXA domain. Phosphoserine occurs at positions 670, 673, and 692. The stretch at 705-762 (SNNFRDNIASLTISIDQIEKELELLRHLILKADLTNNQMQLKILKKSQRTLLKELEMK) forms a coiled coil. The PX domain occupies 782-905 (TKIYIRSYFS…RFLTDPTPFK (124 aa)).

The protein belongs to the sorting nexin family.

It is found in the cytoplasm. In terms of biological role, essential for mitotic growth. Mediates organelle inheritance. The polypeptide is Structural protein MDM1 (MDM1) (Saccharomyces cerevisiae (strain ATCC 204508 / S288c) (Baker's yeast)).